The primary structure comprises 389 residues: MVSVAEIRQAQRAEGPATIMAIGTANPANCVEQSTYPDFYFKITNSEHKVELKEKFQRMCDKSMIKRRYMYLTEEILKDNPRVCEYMAPSLAARQDMAVVVVPRLGKEAAVKAIKEWGQPKSKITHLIFCTTSGVDMPGADYQLTKLLGLRPYVKRYMMYQQGCFAGGTVLRLAKDLAENNKGARVLVVCSEETPVTFRGPSDTHLDSLVGQALFGDGAAALIVGSDPIPEIEKPIFEMVWTAHTIAPDSEGAIDGHLREAGLTFHLLKDVPGIVSKNIDKALIEAFQPLNISDYNSIFWIAHPGGPAILDQVEEKLGLKPEKMKATREVLSEYGNMSSACVLFILDEMRKKSVQAGLKTTGEGLDWGVLFGFGPGLTIETVVLHSVAI.

Residue Cys164 is part of the active site.

The protein belongs to the thiolase-like superfamily. Chalcone/stilbene synthases family.

The catalysed reaction is (E)-4-coumaroyl-CoA + 3 malonyl-CoA + 3 H(+) = 2',4,4',6'-tetrahydroxychalcone + 3 CO2 + 4 CoA. Its pathway is secondary metabolite biosynthesis; flavonoid biosynthesis. Functionally, the primary product of this enzyme is 4,2',4',6'-tetrahydroxychalcone (also termed naringenin-chalcone or chalcone) which can under specific conditions spontaneously isomerize into naringenin. The polypeptide is Chalcone synthase 1 (CHS1) (Medicago sativa (Alfalfa)).